Reading from the N-terminus, the 156-residue chain is Protein CROC-4 (156 aa).

Positions 46-71 (RATSSTTDSSRAPSSPRPPGSTSHCG) are disordered. Low complexity predominate over residues 48–59 (TSSTTDSSRAPS).

In terms of tissue distribution, expressed throughout the brain in the thalamus, subthalamic nucleus, corpus callosum, hippocampus, substantia nigra, caudate nucleus, and amygdala.

It localises to the nucleus. In terms of biological role, may play a role in FOS signaling pathways involved in development and remodeling of neurons. Promotes transcription of the FOS promoter. The chain is Protein CROC-4 from Homo sapiens (Human).